We begin with the raw amino-acid sequence, 334 residues long: Protein FAM50B (334 aa).

At alanine 2 the chain carries N-acetylalanine. The tract at residues 122–175 is disordered; that stretch reads FTLDEEEGDQEDSRQAESAEAHSAGAKKNLGKNPDVDTSFLPDREREEEENRLR. Basic and acidic residues-rich tracts occupy residues 132 to 141 and 163 to 175; these read EDSRQAESAE and PDRE…NRLR.

The protein belongs to the FAM50 family. Widely expressed. Abundant in testis, where it is expressed in seminiferous tubules, not in the interstitium. At the cellular level, expressed in primary spermatocytes and round spermatids, but not detectable in spermatogonia, elongating spermatids, mature spermatozoa, Sertoli cells or Leydig cells.

The sequence is that of Protein FAM50B (Fam50b) from Mus musculus (Mouse).